Here is a 353-residue protein sequence, read N- to C-terminus: uncharacterized protein (353 aa).

Disordered stretches follow at residues 1 to 24, 245 to 280, and 305 to 353; these read MSTSRNVPNKKNNTKQQKYQQQSQ, NKSSNRTHHKSGDKSTVKSTDKQVEKKVEESSEKVP, and AAGK…DLNN. The span at 9 to 24 shows a compositional bias: low complexity; it reads NKKNNTKQQKYQQQSQ. The segment covering 254–280 has biased composition (basic and acidic residues); sequence KSGDKSTVKSTDKQVEKKVEESSEKVP. Positions 321 to 332 are enriched in low complexity; sequence VTTSTSESTVEV. Acidic residues predominate over residues 342–353; that stretch reads EPDEEVFEDLNN.

This is an uncharacterized protein from Acanthamoeba polyphaga mimivirus (APMV).